Consider the following 211-residue polypeptide: uncharacterized protein (211 aa).

The segment at 1 to 43 is disordered; sequence MRPEVGREPAALQPRQRPRSDHQLHRSPFTVPPRTPACRSPGP.

This is an uncharacterized protein from Homo sapiens (Human).